The following is a 97-amino-acid chain: MYSLLIEPILTEKSNMLRTEPRGTEKRYYVFKVRQDANKTELKKAVEKIFNVHPLDCKIINVKPKKKNRRMSRRGYTRSYKKAIIVLDGKESIDIVK.

Belongs to the universal ribosomal protein uL23 family. As to quaternary structure, part of the 50S ribosomal subunit. Contacts protein L29, and trigger factor when it is bound to the ribosome.

Its function is as follows. One of the early assembly proteins it binds 23S rRNA. One of the proteins that surrounds the polypeptide exit tunnel on the outside of the ribosome. Forms the main docking site for trigger factor binding to the ribosome. In Brachyspira hyodysenteriae (strain ATCC 49526 / WA1), this protein is Large ribosomal subunit protein uL23.